A 237-amino-acid chain; its full sequence is 2-C-methyl-D-erythritol 4-phosphate cytidylyltransferase (237 aa).

Belongs to the IspD/TarI cytidylyltransferase family. IspD subfamily.

It carries out the reaction 2-C-methyl-D-erythritol 4-phosphate + CTP + H(+) = 4-CDP-2-C-methyl-D-erythritol + diphosphate. It functions in the pathway isoprenoid biosynthesis; isopentenyl diphosphate biosynthesis via DXP pathway; isopentenyl diphosphate from 1-deoxy-D-xylulose 5-phosphate: step 2/6. Catalyzes the formation of 4-diphosphocytidyl-2-C-methyl-D-erythritol from CTP and 2-C-methyl-D-erythritol 4-phosphate (MEP). The polypeptide is 2-C-methyl-D-erythritol 4-phosphate cytidylyltransferase (Vibrio vulnificus (strain YJ016)).